The primary structure comprises 365 residues: tRNA N6-adenosine threonylcarbamoyltransferase (365 aa).

H119 and H123 together coordinate Fe cation. Residues 141–145, D174, G187, and N288 contribute to the substrate site; that span reads LVSGG. D316 lines the Fe cation pocket.

It belongs to the KAE1 / TsaD family. Fe(2+) is required as a cofactor.

The protein localises to the cytoplasm. The enzyme catalyses L-threonylcarbamoyladenylate + adenosine(37) in tRNA = N(6)-L-threonylcarbamoyladenosine(37) in tRNA + AMP + H(+). Its function is as follows. Required for the formation of a threonylcarbamoyl group on adenosine at position 37 (t(6)A37) in tRNAs that read codons beginning with adenine. Is involved in the transfer of the threonylcarbamoyl moiety of threonylcarbamoyl-AMP (TC-AMP) to the N6 group of A37, together with TsaE and TsaB. TsaD likely plays a direct catalytic role in this reaction. This chain is tRNA N6-adenosine threonylcarbamoyltransferase, found in Agrobacterium fabrum (strain C58 / ATCC 33970) (Agrobacterium tumefaciens (strain C58)).